The chain runs to 603 residues: Sabinene hydrate synthase, chloroplastic (603 aa).

The transit peptide at 1 to 47 (MSTISINHVGLLRNPLHGKSKRASINKSWSLCLPRSSSASRLVKPCR) directs the protein to the chloroplast. Mn(2+)-binding residues include aspartate 357 and aspartate 361. Residues 357–361 (DDVYD) carry the DDXXD motif motif. Homodimerization stretches follow at residues 363–369 (YGTLDEL) and 435–472 (EAEW…VSIP). Positions 501 and 509 each coordinate Mn(2+).

The protein belongs to the terpene synthase family. Homodimer. Requires Mn(2+) as cofactor. The cofactor is Mg(2+).

The protein resides in the plastid. The protein localises to the chloroplast. It carries out the reaction (2E)-geranyl diphosphate + H2O = sabinene hydrate + diphosphate. It participates in secondary metabolite biosynthesis; terpenoid biosynthesis. Involved in the biosynthesis of phenolic monoterpenes natural products. Monoterpene synthase which catalyzes the conversion of geranyl diphosphate (GPP) to sabinene hydrate, mainly (Z)-sabinene hydrate and to a lower extent (E)-sabinene hydrate, and the formation of minor amounts and traces of several other monoterpenes (e.g. mainly alpha-thujene, alpha-pinene and myrcene). This is Sabinene hydrate synthase, chloroplastic from Thymus vulgaris (Thyme).